Consider the following 301-residue polypeptide: Polyamine aminopropyltransferase (301 aa).

The PABS domain occupies tryptophan 4–valine 240. Position 33 (glutamine 33) interacts with S-methyl-5'-thioadenosine. Residues histidine 64 and glutamate 89 each contribute to the spermidine site. S-methyl-5'-thioadenosine-binding positions include aspartate 109 and aspartate 141–glycine 142. The active-site Proton acceptor is the aspartate 159.

This sequence belongs to the spermidine/spermine synthase family. Homotrimer.

Its subcellular location is the cytoplasm. The catalysed reaction is S-adenosyl 3-(methylsulfanyl)propylamine + putrescine = S-methyl-5'-thioadenosine + spermidine + H(+). It catalyses the reaction S-adenosyl 3-(methylsulfanyl)propylamine + propane-1,3-diamine = norspermidine + S-methyl-5'-thioadenosine + H(+). The enzyme catalyses norspermidine + S-adenosyl 3-(methylsulfanyl)propylamine = norspermine + S-methyl-5'-thioadenosine + H(+). It carries out the reaction S-adenosyl 3-(methylsulfanyl)propylamine + spermidine = thermospermine + S-methyl-5'-thioadenosine + H(+). Its pathway is amine and polyamine biosynthesis; spermidine biosynthesis; spermidine from putrescine: step 1/1. Competitively inhibited by 5-methylthioadenosine, 5-methylthiotubercidin, S-adenosyl(5)-3-thiopropylamine and S-adenosyl-3-thio-l,8-diaminooctane. Its function is as follows. Involved in the biosynthesis of polyamines which are thought to support the growth of thermophilic microorganisms under high-temperature conditions. It seems that long-chain and branched-chain of polyamines effectively stabilize DNA and RNA, respectively. Catalyzes the irreversible transfer of a propylamine group from the amino donor S-adenosylmethioninamine (decarboxy-AdoMet) to various amine acceptors such as putrescine (1,4-diaminobutane), 1,3-diaminopropane, sym-norspermidine and spermidine. The biosynthesis of caldopentamine from norspermine has been also observed, but with a very low activity. The reaction involves a nucleophilic attack on the C-3 methylene of the propylamine moiety adjacent to the positively charged sulfur of decarboxy-AdoMet. S-adenosylmethioninamine is the only amino donor. In Saccharolobus solfataricus (strain ATCC 35092 / DSM 1617 / JCM 11322 / P2) (Sulfolobus solfataricus), this protein is Polyamine aminopropyltransferase.